The primary structure comprises 227 residues: Cytochrome c oxidase subunit 2 (227 aa).

The Mitochondrial intermembrane segment spans residues 1–14 (MAYPFQLGLQDATS). A helical transmembrane segment spans residues 15 to 45 (PIMEELLHFHDHTLMIVFLISSLVLYIISLM). At 46–59 (LTTKLTHTSTMDAQ) the chain is on the mitochondrial matrix side. Residues 60 to 87 (EVETVWTILPAIILILIALPSLRILYMM) form a helical membrane-spanning segment. Over 88–227 (DEINNPSLTV…YFETWSAVMV (140 aa)) the chain is Mitochondrial intermembrane. Histidine 161, cysteine 196, glutamate 198, cysteine 200, histidine 204, and methionine 207 together coordinate Cu cation. Residue glutamate 198 coordinates Mg(2+). Tyrosine 218 carries the phosphotyrosine modification.

Belongs to the cytochrome c oxidase subunit 2 family. In terms of assembly, component of the cytochrome c oxidase (complex IV, CIV), a multisubunit enzyme composed of 14 subunits. The complex is composed of a catalytic core of 3 subunits MT-CO1, MT-CO2 and MT-CO3, encoded in the mitochondrial DNA, and 11 supernumerary subunits COX4I, COX5A, COX5B, COX6A, COX6B, COX6C, COX7A, COX7B, COX7C, COX8 and NDUFA4, which are encoded in the nuclear genome. The complex exists as a monomer or a dimer and forms supercomplexes (SCs) in the inner mitochondrial membrane with NADH-ubiquinone oxidoreductase (complex I, CI) and ubiquinol-cytochrome c oxidoreductase (cytochrome b-c1 complex, complex III, CIII), resulting in different assemblies (supercomplex SCI(1)III(2)IV(1) and megacomplex MCI(2)III(2)IV(2)). Found in a complex with TMEM177, COA6, COX18, COX20, SCO1 and SCO2. Interacts with TMEM177 in a COX20-dependent manner. Interacts with COX20. Interacts with COX16. The cofactor is Cu cation.

It localises to the mitochondrion inner membrane. It carries out the reaction 4 Fe(II)-[cytochrome c] + O2 + 8 H(+)(in) = 4 Fe(III)-[cytochrome c] + 2 H2O + 4 H(+)(out). Its function is as follows. Component of the cytochrome c oxidase, the last enzyme in the mitochondrial electron transport chain which drives oxidative phosphorylation. The respiratory chain contains 3 multisubunit complexes succinate dehydrogenase (complex II, CII), ubiquinol-cytochrome c oxidoreductase (cytochrome b-c1 complex, complex III, CIII) and cytochrome c oxidase (complex IV, CIV), that cooperate to transfer electrons derived from NADH and succinate to molecular oxygen, creating an electrochemical gradient over the inner membrane that drives transmembrane transport and the ATP synthase. Cytochrome c oxidase is the component of the respiratory chain that catalyzes the reduction of oxygen to water. Electrons originating from reduced cytochrome c in the intermembrane space (IMS) are transferred via the dinuclear copper A center (CU(A)) of subunit 2 and heme A of subunit 1 to the active site in subunit 1, a binuclear center (BNC) formed by heme A3 and copper B (CU(B)). The BNC reduces molecular oxygen to 2 water molecules using 4 electrons from cytochrome c in the IMS and 4 protons from the mitochondrial matrix. The polypeptide is Cytochrome c oxidase subunit 2 (MT-CO2) (Lycalopex sechurae (Sechuran desert fox)).